Consider the following 239-residue polypeptide: Heptaprenylglyceryl phosphate synthase (239 aa).

Residue Lys-12 participates in sn-glycerol 1-phosphate binding. Mg(2+) is bound by residues Asp-14 and Thr-40. Sn-glycerol 1-phosphate contacts are provided by residues 159–164 (YLEYSG), Gly-189, and 209–210 (GN).

This sequence belongs to the GGGP/HepGP synthase family. Group I subfamily. Homodimer. Requires Mg(2+) as cofactor.

It carries out the reaction sn-glycerol 1-phosphate + all-trans-heptaprenyl diphosphate = 3-heptaprenyl-sn-glycero-1-phosphate + diphosphate. It functions in the pathway membrane lipid metabolism; glycerophospholipid metabolism. Its function is as follows. Prenyltransferase that catalyzes in vivo the transfer of the heptaprenyl moiety of heptaprenyl pyrophosphate (HepPP; 35 carbon atoms) to the C3 hydroxyl of sn-glycerol-1-phosphate (G1P), producing heptaprenylglyceryl phosphate (HepGP). This reaction is an ether-bond-formation step in the biosynthesis of archaea-type G1P-based membrane lipids found in Bacillales. To a much lesser extent, is also able to use geranylgeranyl diphosphate (GGPP; C20) as the prenyl donor. This Geobacillus kaustophilus (strain HTA426) protein is Heptaprenylglyceryl phosphate synthase.